A 212-amino-acid chain; its full sequence is Prolactin (212 aa).

The signal sequence occupies residues 1-26 (MARCCKCPRLHLAVTVLACVLVFTEG). 2 disulfides stabilise this stretch: cysteine 71–cysteine 185 and cysteine 202–cysteine 212.

This sequence belongs to the somatotropin/prolactin family. Pituitary gland.

It is found in the secreted. This Ictalurus punctatus (Channel catfish) protein is Prolactin (prl).